We begin with the raw amino-acid sequence, 158 residues long: Transcription elongation factor GreB (158 aa).

Positions 53–75 (KRRLREIDRRVRFLTKRLEVLQI) form a coiled coil.

Belongs to the GreA/GreB family. GreB subfamily.

In terms of biological role, necessary for efficient RNA polymerase transcription elongation past template-encoded arresting sites. The arresting sites in DNA have the property of trapping a certain fraction of elongating RNA polymerases that pass through, resulting in locked ternary complexes. Cleavage of the nascent transcript by cleavage factors such as GreA or GreB allows the resumption of elongation from the new 3'terminus. GreB releases sequences of up to 9 nucleotides in length. This is Transcription elongation factor GreB from Haemophilus influenzae (strain ATCC 51907 / DSM 11121 / KW20 / Rd).